The primary structure comprises 371 residues: Poly(rC)-binding protein 3 (371 aa).

KH domains lie at 45–95 (TLTI…TITG), 129–182 (PVTL…TISG), and 293–357 (ASTH…QYLI).

It localises to the cytoplasm. Its function is as follows. Single-stranded nucleic acid binding protein that binds preferentially to oligo dC. This chain is Poly(rC)-binding protein 3, found in Homo sapiens (Human).